Reading from the N-terminus, the 975-residue chain is 26S proteasome non-ATPase regulatory subunit 1 (975 aa).

The tract at residues 272–303 (EKKSTTTTTTTPASDSMEIDIDSGNEKSGGSS) is disordered. PC repeat units follow at residues 393 to 426 (SAIS…NQTP), 431 to 464 (GSLY…ILHH), 465 to 499 (GASL…VSGE), 500 to 534 (AAGL…EKTI), 536 to 569 (SLSM…LIRY), 570 to 605 (GGMY…SVRR), 606 to 638 (AAVT…PHVR), 640 to 674 (GAAF…YVKQ), 675 to 715 (AAWI…DSMS), and 718 to 748 (GAVL…NMNA). Disordered stretches follow at residues 832 to 882 (SSRS…KSNP) and 922 to 975 (PEQL…EFTE). 2 stretches are compositionally biased toward basic and acidic residues: residues 842–880 (DVEK…ERKS) and 926–935 (VVKEKPETKQ). Positions 944 to 961 (TATATASLPNATTTTSPT) are enriched in low complexity.

It belongs to the proteasome subunit S1 family.

Acts as a regulatory subunit of the 26 proteasome which is involved in the ATP-dependent degradation of ubiquitinated proteins. The protein is 26S proteasome non-ATPase regulatory subunit 1 (psmD1) of Dictyostelium discoideum (Social amoeba).